The following is a 257-amino-acid chain: Dihydroorotate dehydrogenase B (NAD(+)), electron transfer subunit (257 aa).

Residues 2–101 (IRQEKMRVVS…LGPIGNGFPV (100 aa)) form the FAD-binding FR-type domain. FAD contacts are provided by residues 52–55 (RPIS), 69–71 (IYR), and 76–77 (GT). [2Fe-2S] cluster is bound by residues cysteine 220, cysteine 225, cysteine 228, and cysteine 244.

This sequence belongs to the PyrK family. As to quaternary structure, heterotetramer of 2 PyrK and 2 PyrD type B subunits. Requires [2Fe-2S] cluster as cofactor. FAD serves as cofactor.

It participates in pyrimidine metabolism; UMP biosynthesis via de novo pathway; orotate from (S)-dihydroorotate (NAD(+) route): step 1/1. Functionally, responsible for channeling the electrons from the oxidation of dihydroorotate from the FMN redox center in the PyrD type B subunit to the ultimate electron acceptor NAD(+). The chain is Dihydroorotate dehydrogenase B (NAD(+)), electron transfer subunit from Lysinibacillus sphaericus (strain C3-41).